The following is a 203-amino-acid chain: Dephospho-CoA kinase (203 aa).

The DPCK domain occupies serine 3 to alanine 201. Position 11-16 (glycine 11–threonine 16) interacts with ATP.

This sequence belongs to the CoaE family.

It localises to the cytoplasm. It catalyses the reaction 3'-dephospho-CoA + ATP = ADP + CoA + H(+). Its pathway is cofactor biosynthesis; coenzyme A biosynthesis; CoA from (R)-pantothenate: step 5/5. Catalyzes the phosphorylation of the 3'-hydroxyl group of dephosphocoenzyme A to form coenzyme A. This is Dephospho-CoA kinase from Burkholderia thailandensis (strain ATCC 700388 / DSM 13276 / CCUG 48851 / CIP 106301 / E264).